The chain runs to 665 residues: Coiled-coil domain-containing protein 138 (665 aa).

Position 48 is a phosphothreonine (Thr-48). Ser-49 carries the post-translational modification Phosphoserine. The stretch at 198-323 (QQKFAEELQK…YEFMTIQRLK (126 aa)) forms a coiled coil. Phosphoserine is present on Ser-469.

This chain is Coiled-coil domain-containing protein 138 (CCDC138), found in Homo sapiens (Human).